A 109-amino-acid chain; its full sequence is Aquaporin-2 (109 aa).

Residues 1–6 (SIAFSR) are Cytoplasmic-facing. The chain crosses the membrane as a helical span at residues 7–27 (AVFAEFLATLLFVFFGLGSAL). The Extracellular portion of the chain corresponds to 28-35 (NWPSALPS). A helical transmembrane segment spans residues 36 to 54 (TLQIAMAFGLGIGTLVQAL). Residues 55-59 (GHVSG) lie on the Cytoplasmic side of the membrane. An intramembrane region (discontinuously helical) is located at residues 60–69 (AHINPAVTVA). The NPA 1 motif lies at 63–65 (NPA). At 70–80 (CLVGCHVSFLR) the chain is on the cytoplasmic side. A helical membrane pass occupies residues 81–102 (AAFYVAAQLLGAVAGAALLHEI). Over 103–109 (TPAEVRG) the chain is Extracellular.

This sequence belongs to the MIP/aquaporin (TC 1.A.8) family. As to quaternary structure, homotetramer. Post-translationally, serine phosphorylation is necessary and sufficient for expression at the apical membrane. Endocytosis is not phosphorylation-dependent. In terms of processing, N-glycosylated.

It localises to the apical cell membrane. The protein resides in the basolateral cell membrane. The protein localises to the cell membrane. It is found in the cytoplasmic vesicle membrane. Its subcellular location is the golgi apparatus. It localises to the trans-Golgi network membrane. The catalysed reaction is H2O(in) = H2O(out). It catalyses the reaction glycerol(in) = glycerol(out). In terms of biological role, forms a water-specific channel that provides the plasma membranes of renal collecting duct with high permeability to water, thereby permitting water to move in the direction of an osmotic gradient. Plays an essential role in renal water homeostasis. Could also be permeable to glycerol. The sequence is that of Aquaporin-2 from Oryctolagus cuniculus (Rabbit).